The sequence spans 724 residues: Coiled-coil domain-containing protein 175 (724 aa).

Coiled coils occupy residues 131–164 (VEMS…NTAL), 203–256 (INLE…RKET), 282–373 (VVLS…RQYK), 426–534 (ELHR…ERKL), and 565–627 (QLQV…QLRE).

This is Coiled-coil domain-containing protein 175 (CCDC175) from Bos taurus (Bovine).